The sequence spans 556 residues: F-box protein YDR131C (556 aa).

Residues 1-44 (MFDKLPYEIFKQIAWRIPQEDKISLTYVCKRSYESIIPFIYQNL) enclose the F-box domain.

Interacts with SKP1. Component of the probable SCF(YDR131C) complex containing CDC53, SKP1, RBX1 and YDR131C.

The protein localises to the vacuole. The protein operates within protein modification; protein ubiquitination. Functionally, substrate recognition component of a SCF (SKP1-CUL1-F-box protein) E3 ubiquitin-protein ligase complex which mediates the ubiquitination and subsequent proteasomal degradation of target proteins. Probably recognizes and binds to phosphorylated target proteins. The protein is F-box protein YDR131C of Saccharomyces cerevisiae (strain ATCC 204508 / S288c) (Baker's yeast).